Here is a 72-residue protein sequence, read N- to C-terminus: Translation initiation factor IF-1 2 (72 aa).

The S1-like domain occupies 1–72; the sequence is MAKDDVIQMQ…SRARIVFRTK (72 aa).

This sequence belongs to the IF-1 family. In terms of assembly, component of the 30S ribosomal translation pre-initiation complex which assembles on the 30S ribosome in the order IF-2 and IF-3, IF-1 and N-formylmethionyl-tRNA(fMet); mRNA recruitment can occur at any time during PIC assembly.

It is found in the cytoplasm. Its function is as follows. One of the essential components for the initiation of protein synthesis. Stabilizes the binding of IF-2 and IF-3 on the 30S subunit to which N-formylmethionyl-tRNA(fMet) subsequently binds. Helps modulate mRNA selection, yielding the 30S pre-initiation complex (PIC). Upon addition of the 50S ribosomal subunit IF-1, IF-2 and IF-3 are released leaving the mature 70S translation initiation complex. The polypeptide is Translation initiation factor IF-1 2 (Cupriavidus necator (strain ATCC 17699 / DSM 428 / KCTC 22496 / NCIMB 10442 / H16 / Stanier 337) (Ralstonia eutropha)).